Consider the following 672-residue polypeptide: Glycine--tRNA ligase beta subunit (672 aa).

It belongs to the class-II aminoacyl-tRNA synthetase family. In terms of assembly, tetramer of two alpha and two beta subunits.

Its subcellular location is the cytoplasm. It carries out the reaction tRNA(Gly) + glycine + ATP = glycyl-tRNA(Gly) + AMP + diphosphate. The polypeptide is Glycine--tRNA ligase beta subunit (glyS) (Thermotoga maritima (strain ATCC 43589 / DSM 3109 / JCM 10099 / NBRC 100826 / MSB8)).